A 604-amino-acid chain; its full sequence is NADH-ubiquinone oxidoreductase chain 5 (604 aa).

16 consecutive transmembrane segments (helical) span residues 2-22 (FSSL…LSIF), 41-61 (AFIT…ETII), 85-105 (MIFV…SLWY), 115-135 (FFKY…ANNL), 138-158 (LFIG…WWYG), 169-189 (AILY…WFLF), 209-231 (LPLL…HPWL), 239-259 (TPVS…FLLI), 271-291 (IQSL…ICAL), 299-318 (IIAF…IGIN), 323-345 (AFLH…GSII), 364-384 (MPFT…IPFL), 411-431 (LIAT…ALLG), 455-475 (LLIG…PTTV), 486-506 (LTAL…SLMT), and 582-602 (IKLY…LFNL).

It belongs to the complex I subunit 5 family. Core subunit of respiratory chain NADH dehydrogenase (Complex I) which is composed of 45 different subunits.

Its subcellular location is the mitochondrion inner membrane. The enzyme catalyses a ubiquinone + NADH + 5 H(+)(in) = a ubiquinol + NAD(+) + 4 H(+)(out). In terms of biological role, core subunit of the mitochondrial membrane respiratory chain NADH dehydrogenase (Complex I) which catalyzes electron transfer from NADH through the respiratory chain, using ubiquinone as an electron acceptor. Essential for the catalytic activity and assembly of complex I. This is NADH-ubiquinone oxidoreductase chain 5 (MT-ND5) from Equus caballus (Horse).